The chain runs to 121 residues: Estrogen receptor (121 aa).

Residues 1–121 (LFAPNLLLDR…IRHMSNKGME (121 aa)) form the NR LBD domain. Cys-45 carries the S-palmitoyl cysteine lipid modification.

Belongs to the nuclear hormone receptor family. NR3 subfamily. As to quaternary structure, binds DNA as a homodimer. Can form a heterodimer with ESR2. Interacts with coactivator NCOA5. Interacts with NCOA7; the interaction is ligand-inducible. Interacts with AKAP13, CUEDC2, HEXIM1, KDM5A, MAP1S, PELP1, SMARD1, and UBE1C. Interacts with MUC1; the interaction is stimulated by 7 beta-estradiol (E2) and enhances ERS1-mediated transcription. Interacts with DNTTIP2, and UIMC1. Interacts with KMT2D/MLL2. Interacts with ATAD2; the interaction is enhanced by estradiol. Interacts with KIF18A and LDB1. Interacts with RLIM (via its C-terminus). Interacts with MACROD1. Interacts with SH2D4A and PLCG. Interacts with SH2D4A; the interaction blocks binding to PLCG and inhibits estrogen-induced cell proliferation. Interacts with DYNLL1. Interacts with CCDC62; the interaction requires estradiol and appears to enhance the transcription of target genes. Interacts with NR2C1; the interaction prevents homodimerization of ESR1 and suppresses its transcriptional activity and cell growth. Interacts with DNAAF4. Interacts with PRMT2. Interacts with PI3KR1 or PIK3R2, SRC and PTK2/FAK1. Interacts with RBFOX2. Interacts with EP300; the interaction is estrogen-dependent and enhanced by CITED1. Interacts with CITED1; the interaction is estrogen-dependent. Interacts with FAM120B, FOXL2, PHB2 and SLC30A9. Interacts with coactivators NCOA3 and NCOA6. Interacts with STK3/MST2 only in the presence of SAV1 and vice-versa. Binds to CSNK1D. Interacts with NCOA2; NCOA2 can interact with ESR1 AF-1 and AF-2 domains simultaneously and mediate their transcriptional synergy. Interacts with DDX5. Interacts with NCOA1; the interaction seems to require a self-association of N-terminal and C-terminal regions. Interacts with ZNF366, DDX17, NFKB1, RELA, SP1 and SP3. Interacts with NRIP1. Interacts with GPER1; the interaction occurs in an estrogen-dependent manner. Interacts with CLOCK and the interaction is stimulated by estrogen. Interacts with TRIP4 (ufmylated); estrogen dependent. Interacts with LMTK3; the interaction phosphorylates ESR1 (in vitro) and protects it against proteasomal degradation. Interacts with CCAR2 (via N-terminus) in a ligand-independent manner. Interacts with ZFHX3. Interacts with SFR1 in a ligand-dependent and -independent manner. Interacts with DCAF13, LATS1 and DCAF1; regulates ESR1 ubiquitination and ubiquitin-mediated proteasomal degradation. Interacts (via DNA-binding domain) with POU4F2 (C-terminus); this interaction increases the estrogen receptor ESR1 transcriptional activity in a DNA- and ligand 17-beta-estradiol-independent manner. Interacts with ESRRB isoform 1. Interacts with UBE3A and WBP2. Interacts with GTF2B. Interacts with RBM39. In the absence of hormonal ligand, interacts with TACC1. Interacts with BAG1; the interaction is promoted in the absence of estradiol (17-beta-estradiol/E2). Interacts with and ubiquitinated by STUB1; the interaction is promoted in the absence of estradiol (17-beta-estradiol/E2). Interacts with NEDD8. Ubiquitinated; regulated by LATS1 via DCAF1 it leads to ESR1 proteasomal degradation. Deubiquitinated by OTUB1. Ubiquitinated by STUB1/CHIP; in the CA1 hippocampal region following loss of endogenous circulating estradiol (17-beta-estradiol/E2). Ubiquitinated by UBR5, leading to its degradation: UBR5 specifically recognizes and binds ligand-bound ESR1 when it is not associated with coactivators (NCOAs). In presence of NCOAs, the UBR5-degron is not accessible, preventing its ubiquitination and degradation. In terms of processing, palmitoylated at Cys-45 by ZDHHC7 and ZDHHC21. Palmitoylation is required for plasma membrane targeting and for rapid intracellular signaling via ERK and AKT kinases and cAMP generation, but not for signaling mediated by the nuclear hormone receptor. Post-translationally, phosphorylated by cyclin A/CDK2 and CK1. Phosphorylation probably enhances transcriptional activity. Dephosphorylation by PPP5C inhibits its transactivation activity. Phosphorylated by LMTK3 (in vitro). Dimethylated by PRMT1. Demethylated by JMJD6.

It is found in the nucleus. The protein resides in the cytoplasm. Its subcellular location is the golgi apparatus. The protein localises to the cell membrane. Functionally, nuclear hormone receptor. The steroid hormones and their receptors are involved in the regulation of eukaryotic gene expression and affect cellular proliferation and differentiation in target tissues. Ligand-dependent nuclear transactivation involves either direct homodimer binding to a palindromic estrogen response element (ERE) sequence or association with other DNA-binding transcription factors, such as AP-1/c-Jun, c-Fos, ATF-2, Sp1 and Sp3, to mediate ERE-independent signaling. Ligand binding induces a conformational change allowing subsequent or combinatorial association with multiprotein coactivator complexes through LXXLL motifs of their respective components. Mutual transrepression occurs between the estrogen receptor (ER) and NF-kappa-B in a cell-type specific manner. Decreases NF-kappa-B DNA-binding activity and inhibits NF-kappa-B-mediated transcription from the IL6 promoter and displace RELA/p65 and associated coregulators from the promoter. Recruited to the NF-kappa-B response element of the CCL2 and IL8 promoters and can displace CREBBP. Present with NF-kappa-B components RELA/p65 and NFKB1/p50 on ERE sequences. Can also act synergistically with NF-kappa-B to activate transcription involving respective recruitment adjacent response elements; the function involves CREBBP. Can activate the transcriptional activity of TFF1. Also mediates membrane-initiated estrogen signaling involving various kinase cascades. Essential for MTA1-mediated transcriptional regulation of BRCA1 and BCAS3. Maintains neuronal survival in response to ischemic reperfusion injury when in the presence of circulating estradiol (17-beta-estradiol/E2). This is Estrogen receptor (ESR1) from Macaca mulatta (Rhesus macaque).